The following is a 530-amino-acid chain: Ubiquitin carboxyl-terminal hydrolase 17-like protein 1 (530 aa).

The USP domain occupies 80–375; that stretch reads AGLQNMGNTC…QAYVLFYIQK (296 aa). Residue C89 is the Nucleophile of the active site. H334 acts as the Proton acceptor in catalysis. Composition is skewed to basic and acidic residues over residues 382-392 and 398-411; these read SESVSRGREPR and DTDR…LKRD. The segment at 382-411 is disordered; that stretch reads SESVSRGREPRALGAEDTDRRAKQGELKRD.

It belongs to the peptidase C19 family. USP17 subfamily.

It localises to the nucleus. Its subcellular location is the endoplasmic reticulum. The catalysed reaction is Thiol-dependent hydrolysis of ester, thioester, amide, peptide and isopeptide bonds formed by the C-terminal Gly of ubiquitin (a 76-residue protein attached to proteins as an intracellular targeting signal).. Its function is as follows. Deubiquitinating enzyme that removes conjugated ubiquitin from specific proteins to regulate different cellular processes that may include cell proliferation, progression through the cell cycle, apoptosis, cell migration, and the cellular response to viral infection. The protein is Ubiquitin carboxyl-terminal hydrolase 17-like protein 1 (USP17L1) of Homo sapiens (Human).